Consider the following 289-residue polypeptide: Phosphatidylserine decarboxylase proenzyme (289 aa).

Catalysis depends on charge relay system; for autoendoproteolytic cleavage activity residues Asp92, His149, and Ser254. The active-site Schiff-base intermediate with substrate; via pyruvic acid; for decarboxylase activity is Ser254. A Pyruvic acid (Ser); by autocatalysis modification is found at Ser254.

It belongs to the phosphatidylserine decarboxylase family. PSD-B subfamily. Prokaryotic type I sub-subfamily. As to quaternary structure, heterodimer of a large membrane-associated beta subunit and a small pyruvoyl-containing alpha subunit. Pyruvate serves as cofactor. Is synthesized initially as an inactive proenzyme. Formation of the active enzyme involves a self-maturation process in which the active site pyruvoyl group is generated from an internal serine residue via an autocatalytic post-translational modification. Two non-identical subunits are generated from the proenzyme in this reaction, and the pyruvate is formed at the N-terminus of the alpha chain, which is derived from the carboxyl end of the proenzyme. The autoendoproteolytic cleavage occurs by a canonical serine protease mechanism, in which the side chain hydroxyl group of the serine supplies its oxygen atom to form the C-terminus of the beta chain, while the remainder of the serine residue undergoes an oxidative deamination to produce ammonia and the pyruvoyl prosthetic group on the alpha chain. During this reaction, the Ser that is part of the protease active site of the proenzyme becomes the pyruvoyl prosthetic group, which constitutes an essential element of the active site of the mature decarboxylase.

It localises to the cell membrane. It catalyses the reaction a 1,2-diacyl-sn-glycero-3-phospho-L-serine + H(+) = a 1,2-diacyl-sn-glycero-3-phosphoethanolamine + CO2. The protein operates within phospholipid metabolism; phosphatidylethanolamine biosynthesis; phosphatidylethanolamine from CDP-diacylglycerol: step 2/2. In terms of biological role, catalyzes the formation of phosphatidylethanolamine (PtdEtn) from phosphatidylserine (PtdSer). The chain is Phosphatidylserine decarboxylase proenzyme from Pseudomonas aeruginosa (strain LESB58).